A 91-amino-acid polypeptide reads, in one-letter code: C-C motif chemokine 5 (91 aa).

The N-terminal stretch at 1–23 (MKISAAALTIILTAAALCTPAPA) is a signal peptide. 2 disulfide bridges follow: Cys-33–Cys-57 and Cys-34–Cys-73.

This sequence belongs to the intercrine beta (chemokine CC) family. As to expression, T-cell and macrophage specific.

The protein resides in the secreted. Functionally, chemoattractant for blood monocytes, memory T-helper cells and eosinophils. Causes the release of histamine from basophils and activates eosinophils. May activate several chemokine receptors including CCR1, CCR3, CCR4 and CCR5. May also be an agonist of the G protein-coupled receptor GPR75. Together with GPR75, may play a role in neuron survival through activation of a downstream signaling pathway involving the PI3, Akt and MAP kinases. By activating GPR75 may also play a role in insulin secretion by islet cells. The polypeptide is C-C motif chemokine 5 (Ccl5) (Mus musculus (Mouse)).